The sequence spans 223 residues: DNA-directed RNA polymerase III subunit RPC7 (223 aa).

A compositionally biased stretch (basic and acidic residues) spans 111–124; that stretch reads MMPRKKCKKGDPKS. Residues 111-223 form a disordered region; it reads MMPRKKCKKG…SDDNMDEATY (113 aa). Phosphothreonine is present on threonine 134. Over residues 144–156 the composition is skewed to basic and acidic residues; that stretch reads KTIEELEKRGEGE. The residue at position 158 (serine 158) is a Phosphoserine. Acidic residues-rich tracts occupy residues 173 to 198 and 206 to 223; these read KDDE…EEND and NGDD…EATY.

This sequence belongs to the eukaryotic RPC7 RNA polymerase subunit family. Component of the RNA polymerase III complex consisting of 17 subunits: a ten-subunit horseshoe-shaped catalytic core composed of POLR3A/RPC1, POLR3B/RPC2, POLR1C/RPAC1, POLR1D/RPAC2, POLR3K/RPC10, POLR2E/RPABC1, POLR2F/RPABC2, POLR2H/RPABC3, POLR2K/RPABC4 and POLR2L/RPABC5; a mobile stalk composed of two subunits POLR3H/RPC8 and CRCP/RPC9, protruding from the core and functioning primarily in transcription initiation; and additional subunits homologous to general transcription factors of the RNA polymerase II machinery, POLR3C/RPC3-POLR3F/RPC6-POLR3G/RPC7 heterotrimer required for transcription initiation and POLR3D/RPC4-POLR3E/RPC5 heterodimer involved in both transcription initiation and termination. Directly interacts with POLR3C/RPC62. Also found in a trimeric complex with POLR3C/RPC3 and POLR3GL. In terms of tissue distribution, expressed at low levels in the liver.

Its subcellular location is the nucleus. The protein resides in the cytoplasm. In terms of biological role, DNA-dependent RNA polymerase catalyzes the transcription of DNA into RNA using the four ribonucleoside triphosphates as substrates. Specific peripheric component of RNA polymerase III (Pol III) which synthesizes small non-coding RNAs including 5S rRNA, snRNAs, tRNAs and miRNAs from at least 500 distinct genomic loci. Acts as a long tether that bridges POLR3C/RPC3-POLR3F/RPC6-POLR3G/RPC7 heterotrimer and the mobile stalk of Pol III, coordinating the dynamics of Pol III stalk and clamp modules during the transition from apo to elongation state. Pol III exists as two alternative complexes defined by the mutually exclusive incorporation of subunit POLR3G/RPC7alpha or POLR3GL/RPC7beta. POLR3G/RPC7alpha modulates Pol III transcriptome by specifically enhancing the transcription of snaR-A non-coding RNAs. At resting state, occupies the active site of apo Pol III and keeps Pol III in an autoinhibitory mode, preventing non-specific transcription. Pol III plays a key role in sensing and limiting infection by intracellular bacteria and DNA viruses. Acts as a nuclear and cytosolic DNA sensor involved in innate immune response. Can sense non-self dsDNA that serves as template for transcription into dsRNA. The non-self RNA polymerase III transcripts, such as Epstein-Barr virus-encoded RNAs (EBERs), induce type I interferon and NF-kappa-B through the RIG-I pathway. This Mus musculus (Mouse) protein is DNA-directed RNA polymerase III subunit RPC7 (Polr3g).